The primary structure comprises 187 residues: Elongation factor P (187 aa).

The protein belongs to the elongation factor P family.

The protein resides in the cytoplasm. It functions in the pathway protein biosynthesis; polypeptide chain elongation. In terms of biological role, involved in peptide bond synthesis. Stimulates efficient translation and peptide-bond synthesis on native or reconstituted 70S ribosomes in vitro. Probably functions indirectly by altering the affinity of the ribosome for aminoacyl-tRNA, thus increasing their reactivity as acceptors for peptidyl transferase. This Nocardia farcinica (strain IFM 10152) protein is Elongation factor P.